The following is a 448-amino-acid chain: tRNA modification GTPase MnmE (448 aa).

Arg-22, Glu-79, and Lys-118 together coordinate (6S)-5-formyl-5,6,7,8-tetrahydrofolate. The TrmE-type G domain maps to 214-371; sequence GLHVVLAGQP…LRQELLRIAG (158 aa). K(+) is bound at residue Asn-224. GTP is bound by residues 224–229, 243–249, and 268–271; these read NVGKSS, TPIAGTT, and DTAG. Ser-228 lines the Mg(2+) pocket. K(+)-binding residues include Thr-243, Ile-245, and Thr-248. Residue Thr-249 participates in Mg(2+) binding. Lys-448 serves as a coordination point for (6S)-5-formyl-5,6,7,8-tetrahydrofolate.

It belongs to the TRAFAC class TrmE-Era-EngA-EngB-Septin-like GTPase superfamily. TrmE GTPase family. As to quaternary structure, homodimer. Heterotetramer of two MnmE and two MnmG subunits. It depends on K(+) as a cofactor.

Its subcellular location is the cytoplasm. Functionally, exhibits a very high intrinsic GTPase hydrolysis rate. Involved in the addition of a carboxymethylaminomethyl (cmnm) group at the wobble position (U34) of certain tRNAs, forming tRNA-cmnm(5)s(2)U34. The sequence is that of tRNA modification GTPase MnmE from Dechloromonas aromatica (strain RCB).